The sequence spans 487 residues: Sensor protein CopS (487 aa).

Residues 1-9 (MKPGSLTLR) lie on the Periplasmic side of the membrane. The helical transmembrane segment at 10 to 30 (LSLLFVVAVAAVLIIVGVAFN) threads the bilayer. The Cytoplasmic segment spans residues 31 to 136 (ELSRHHFRAL…TASVSLPTAS (106 aa)). The helical transmembrane segment at 137–157 (PPLTAWLVLDVTTHMHFFAML) threads the bilayer. Residues 158–159 (ER) lie on the Periplasmic side of the membrane. Residues 160 to 180 (WFWGVLLASTVLSAALGWLVA) traverse the membrane as a helical segment. One can recognise an HAMP domain in the interval 181–234 (KNGLRPVARVTQTAASMSAGSLKERIPLEPVPDELRALITAFNSMLGRLDDSFM). Residues 181-487 (KNGLRPVARV…EHETGCHCAG (307 aa)) lie on the Cytoplasmic side of the membrane. The Histidine kinase domain occupies 242–455 (DIAHELRTPI…LHPHLHAIAC (214 aa)). At His245 the chain carries Phosphohistidine; by autocatalysis.

It localises to the cell inner membrane. The catalysed reaction is ATP + protein L-histidine = ADP + protein N-phospho-L-histidine.. Member of the two-component regulatory system CopS/CopR. Involved in the activation of copper resistance gene operon copABCD. Specifically recognizes or transduces a signal only in response to copper. This would lead to phosphorylation of CopR in the cytoplasm. CopS/CopR may also regulate chromosomally encoded genes. May also be involved in basic copper metabolism. This chain is Sensor protein CopS (copS), found in Pseudomonas syringae pv. tomato.